The primary structure comprises 178 residues: Large ribosomal subunit protein uL6 (178 aa).

Belongs to the universal ribosomal protein uL6 family. Part of the 50S ribosomal subunit.

This protein binds to the 23S rRNA, and is important in its secondary structure. It is located near the subunit interface in the base of the L7/L12 stalk, and near the tRNA binding site of the peptidyltransferase center. This is Large ribosomal subunit protein uL6 from Natranaerobius thermophilus (strain ATCC BAA-1301 / DSM 18059 / JW/NM-WN-LF).